A 473-amino-acid polypeptide reads, in one-letter code: Zinc finger and SCAN domain-containing protein 21 (473 aa).

Lys27 participates in a covalent cross-link: Glycyl lysine isopeptide (Lys-Gly) (interchain with G-Cter in SUMO2). The region spanning 45–127 (RQRFRQFGYH…TLLEDLEREL (83 aa)) is the SCAN box domain. The disordered stretch occupies residues 127-171 (LDEPGHQVSTPPNEQKPVWEKISSSGTAKESPSSMQPQPLETSHN). Positions 148-171 (ISSSGTAKESPSSMQPQPLETSHN) are enriched in polar residues. Residues Lys221 and Lys232 each participate in a glycyl lysine isopeptide (Lys-Gly) (interchain with G-Cter in SUMO2) cross-link. The disordered stretch occupies residues 244-272 (LENEKGTKPPLQEAGSKKGRESVPTKPTP). Over residues 258–272 (GSKKGRESVPTKPTP) the composition is skewed to basic and acidic residues. 7 C2H2-type zinc fingers span residues 277–299 (YICA…RRTH), 305–327 (YVCT…YRTH), 333–354 (YDCK…QRMH), 360–382 (YQCK…YRIH), 388–410 (YQCN…QRLH), 416–438 (YKCK…HRIH), and 444–466 (YWCH…QRVH). A Glycyl lysine isopeptide (Lys-Gly) (interchain with G-Cter in SUMO2) cross-link involves residue Lys349.

Belongs to the krueppel C2H2-type zinc-finger protein family.

Its subcellular location is the nucleus. Its function is as follows. Strong transcriptional activator. Plays an important role in spermatogenesis; essential for the progression of meiotic prophase I in spermatocytes. The chain is Zinc finger and SCAN domain-containing protein 21 (ZSCAN21) from Gorilla gorilla gorilla (Western lowland gorilla).